A 91-amino-acid chain; its full sequence is UPF0250 protein Lcho_4239 (91 aa).

Belongs to the UPF0250 family.

This Leptothrix cholodnii (strain ATCC 51168 / LMG 8142 / SP-6) (Leptothrix discophora (strain SP-6)) protein is UPF0250 protein Lcho_4239.